Here is a 160-residue protein sequence, read N- to C-terminus: DNA polymerase delta subunit 4 (160 aa).

The interval 1–48 (MKKRTTQAKKSGQNTNIRDVFPHVVRSNSSQSHIGKKVSSEQSPTPDV) is disordered. The segment covering 8–17 (AKKSGQNTNI) has biased composition (polar residues).

The protein belongs to the DNA polymerase delta subunit 4 family. As to quaternary structure, heterotetramer that consist of the pol3, cdc1, cdc27 and cdm1 subunits. Interacts with cdc1 and pol3.

The protein resides in the nucleus. In terms of biological role, appears to have a role in the stabilization of the DNA polymerase delta complex. The sequence is that of DNA polymerase delta subunit 4 (cdm1) from Schizosaccharomyces pombe (strain 972 / ATCC 24843) (Fission yeast).